The chain runs to 54 residues: Ovomucoid (54 aa).

The Kazal-like domain maps to 4-54; that stretch reads VDCSDYPKPACTVEYMPLCGSDNKTYGNKCNFCNAVVDSNGTLTLSHFGKC. Cystine bridges form between Cys-6–Cys-36, Cys-14–Cys-33, and Cys-22–Cys-54. Asn-43 carries an N-linked (GlcNAc...) asparagine glycan.

It is found in the secreted. This chain is Ovomucoid, found in Anser canagicus (Emperor goose).